Here is a 793-residue protein sequence, read N- to C-terminus: E3 UFM1-protein ligase 1 (793 aa).

The residue at position 2 (A2) is an N-acetylalanine. Residues 2–200 form a mediates interaction with DDRGK1 region; sequence ADAWEEIRRL…RGLFSAITRP (199 aa). The interval 2–212 is required for E3 UFM1-protein ligase activity; that stretch reads ADAWEEIRRL…VNSLISKYGF (211 aa). The interval 121–250 is involved in CDK5RAP3-binding; the sequence is DRLAEEVNDK…KAVFVPDIYS (130 aa). Residues 200-400 are mediates interaction with TRIP4; the sequence is PTAVNSLISK…NPVHLITEED (201 aa). Positions 407–473 are disordered; sequence LESVSTSKKD…SSHTGKKKPE (67 aa). An Omega-N-methylarginine modification is found at R433. Residue S458 is modified to Phosphoserine. The mediates interaction with CDK5RAP3 stretch occupies residues 490–684; sequence IQDAPEEFIS…QLKVTEDPAL (195 aa). T536 carries the phosphothreonine modification.

This sequence belongs to the UFL1 family. Catalytic component of the UFM1 ribosome E3 ligase (UREL) complex, composed of UFL1, DDRGK1 and CDK5RAP3. Interacts with E2-like enzyme UFC1. Interacts with RELA. Interacts with NBN; promoting recruitment to double-strand breaks following DNA damage. Interacts (when phosphorylated) with YWHAG/14-3-3-gamma; sequestering UFL1 and preventing its association with PDCD1/PD-1 substrate. In terms of processing, ubiquitinated, leading to its degradation by the proteasome. Interaction with CDK5RAP3 protects both proteins against ubiquitination and degradation via the proteasome. Post-translationally, phosphorylation at Thr-536 by AMPK promotes its interaction with YWHAG/14-3-3-gamma, thereby preventing UFL1 association with PDCD1/PD-1 substrate.

It localises to the endoplasmic reticulum membrane. The protein resides in the cytoplasm. The protein localises to the cytosol. Its subcellular location is the nucleus. It is found in the chromosome. E3 protein ligase that mediates ufmylation, the covalent attachment of the ubiquitin-like modifier UFM1 to lysine residues on target proteins, and which plays a key role in various processes, such as ribosome recycling, response to DNA damage, interferon response or reticulophagy (also called ER-phagy). Catalyzes ufmylation of many protein, such as CD274/PD-L1, CDK5RAP3, CYB5R3, DDRGK1, EIF6, histone H4, MRE11, P4HB, PDCD1/PD-1, TRIP4, RPN1, RPS20/uS10, RPL10/uL16, RPL26/uL24, SYVN1/HRD1 and TP53/p53. As part of the UREL complex, plays a key role in ribosome recycling by catalyzing mono-ufmylation of RPL26/uL24 subunit of the 60S ribosome. Ufmylation of RPL26/uL24 occurs on free 60S ribosomes following ribosome dissociation: it weakens the junction between post-termination 60S subunits and SEC61 translocons, promoting release and recycling of the large ribosomal subunit from the endoplasmic reticulum membrane. Ufmylation of RPL26/uL24 and subsequent 60S ribosome recycling either take place after normal termination of translation or after ribosome stalling during cotranslational translocation at the endoplasmic reticulum. Involved in reticulophagy in response to endoplasmic reticulum stress by mediating ufmylation of proteins such as CYB5R3 and RPN1, thereby promoting lysosomal degradation of ufmylated proteins. Ufmylation in response to endoplasmic reticulum stress is essential for processes such as hematopoiesis, blood vessel morphogenesis or inflammatory response. Mediates ufmylation of DDRGK1 and CDK5RAP3; the role of these modifications is however unclear: as both DDRGK1 and CDK5RAP3 act as substrate adapters for ufmylation, it is uncertain whether ufmylation of these proteins is, a collateral effect or is required for ufmylation. Acts as a negative regulator of T-cell activation by mediating ufmylation and stabilization of PDCD1/PD-1. Also involved in the response to DNA damage: recruited to double-strand break sites following DNA damage and mediates monoufmylation of histone H4 and ufmylation of MRE11. Mediates ufmylation of TP53/p53, promoting its stability. Catalyzes ufmylation of TRIP4, thereby playing a role in nuclear receptor-mediated transcription. Required for hematopoietic stem cell function and hematopoiesis. This chain is E3 UFM1-protein ligase 1, found in Macaca fascicularis (Crab-eating macaque).